Reading from the N-terminus, the 129-residue chain is Fluoride-specific ion channel FluC 2 (129 aa).

Helical transmembrane passes span 3 to 23, 32 to 52, 59 to 79, and 90 to 110; these read FLYV…MNLW, ATLA…QFLA, LVIL…FSAF, and GAWL…LIMV. Na(+) contacts are provided by G71 and T74.

Belongs to the fluoride channel Fluc/FEX (TC 1.A.43) family.

Its subcellular location is the cell membrane. The catalysed reaction is fluoride(in) = fluoride(out). Na(+) is not transported, but it plays an essential structural role and its presence is essential for fluoride channel function. In terms of biological role, fluoride-specific ion channel. Important for reducing fluoride concentration in the cell, thus reducing its toxicity. This Listeria monocytogenes serotype 4b (strain F2365) protein is Fluoride-specific ion channel FluC 2.